The following is a 288-amino-acid chain: Elongation factor Ts (288 aa).

The segment at 82–85 (TDFV) is involved in Mg(2+) ion dislocation from EF-Tu.

The protein belongs to the EF-Ts family.

The protein resides in the cytoplasm. In terms of biological role, associates with the EF-Tu.GDP complex and induces the exchange of GDP to GTP. It remains bound to the aminoacyl-tRNA.EF-Tu.GTP complex up to the GTP hydrolysis stage on the ribosome. This chain is Elongation factor Ts, found in Chlorobium phaeovibrioides (strain DSM 265 / 1930) (Prosthecochloris vibrioformis (strain DSM 265)).